The chain runs to 133 residues: uncharacterized protein (133 aa).

One can recognise an HIT domain in the interval 3-106 (IFTKIINREL…PTRSLSDFGF (104 aa)). The Histidine triad motif motif lies at 90–94 (HLHIH).

This is an uncharacterized protein from Mycobacterium tuberculosis (strain ATCC 25618 / H37Rv).